The primary structure comprises 339 residues: MAIKIGINGFGRIGRIVFRAAQHRDDIEVVGINDLIDVEYMAYMLKYDSTHGRFDGTVEVKDGNLVVNGKTIRVTAERDPANLNWGAIGVDIAVEATGLFLTDETARKHITAGAKKVVLTGPSKDATPMFVRGVNFNAYAGQDIVSNASCTTNCLAPLARVVHETFGIKDGLMTTVHATTATQKTVDGPSAKDWRGGRGASQNIIPSSTGAAKAVGKVLPALNGKLTGMAFRVPTPNVSVVDLTVNLEKPASYDAIKQAIKDAAEGKTFNGELKGVLGYTEDAVVSTDFNGCALTSVFDADAGIALTDSFVKLVSWYDNETGYSNKVLDLVAHIYNYKG.

Residues 12-13 (RI), Asp-34, Arg-78, and Thr-120 each bind NAD(+). Residues 149 to 151 (SCT), Thr-180, 209 to 210 (TG), and Arg-232 contribute to the D-glyceraldehyde 3-phosphate site. Cys-150 acts as the Nucleophile in catalysis. Asn-319 serves as a coordination point for NAD(+).

Belongs to the glyceraldehyde-3-phosphate dehydrogenase family. Homotetramer.

Its subcellular location is the cytoplasm. It catalyses the reaction D-glyceraldehyde 3-phosphate + phosphate + NAD(+) = (2R)-3-phospho-glyceroyl phosphate + NADH + H(+). It functions in the pathway carbohydrate degradation; glycolysis; pyruvate from D-glyceraldehyde 3-phosphate: step 1/5. Functionally, catalyzes the oxidative phosphorylation of glyceraldehyde 3-phosphate (G3P) to 1,3-bisphosphoglycerate (BPG) using the cofactor NAD. The first reaction step involves the formation of a hemiacetal intermediate between G3P and a cysteine residue, and this hemiacetal intermediate is then oxidized to a thioester, with concomitant reduction of NAD to NADH. The reduced NADH is then exchanged with the second NAD, and the thioester is attacked by a nucleophilic inorganic phosphate to produce BPG. The protein is Glyceraldehyde-3-phosphate dehydrogenase (gapA) of Haemophilus influenzae (strain ATCC 51907 / DSM 11121 / KW20 / Rd).